A 169-amino-acid chain; its full sequence is Peptide methionine sulfoxide reductase MsrA (169 aa).

The active site involves Cys11.

Belongs to the MsrA Met sulfoxide reductase family.

It carries out the reaction L-methionyl-[protein] + [thioredoxin]-disulfide + H2O = L-methionyl-(S)-S-oxide-[protein] + [thioredoxin]-dithiol. The catalysed reaction is [thioredoxin]-disulfide + L-methionine + H2O = L-methionine (S)-S-oxide + [thioredoxin]-dithiol. In terms of biological role, has an important function as a repair enzyme for proteins that have been inactivated by oxidation. Catalyzes the reversible oxidation-reduction of methionine sulfoxide in proteins to methionine. This chain is Peptide methionine sulfoxide reductase MsrA, found in Leifsonia xyli subsp. xyli (strain CTCB07).